The chain runs to 323 residues: 4-hydroxy-3-methylbut-2-enyl diphosphate reductase (323 aa).

C21 contacts [4Fe-4S] cluster. H50 and H83 together coordinate (2E)-4-hydroxy-3-methylbut-2-enyl diphosphate. Residues H50 and H83 each contribute to the dimethylallyl diphosphate site. 2 residues coordinate isopentenyl diphosphate: H50 and H83. C105 is a [4Fe-4S] cluster binding site. Residue H133 participates in (2E)-4-hydroxy-3-methylbut-2-enyl diphosphate binding. H133 serves as a coordination point for dimethylallyl diphosphate. H133 is a binding site for isopentenyl diphosphate. The active-site Proton donor is the E135. T173 contacts (2E)-4-hydroxy-3-methylbut-2-enyl diphosphate. Residue C203 coordinates [4Fe-4S] cluster. (2E)-4-hydroxy-3-methylbut-2-enyl diphosphate is bound by residues S231, S232, N233, and S276. Dimethylallyl diphosphate contacts are provided by S231, S232, N233, and S276. S231, S232, N233, and S276 together coordinate isopentenyl diphosphate.

The protein belongs to the IspH family. Requires [4Fe-4S] cluster as cofactor.

It carries out the reaction isopentenyl diphosphate + 2 oxidized [2Fe-2S]-[ferredoxin] + H2O = (2E)-4-hydroxy-3-methylbut-2-enyl diphosphate + 2 reduced [2Fe-2S]-[ferredoxin] + 2 H(+). It catalyses the reaction dimethylallyl diphosphate + 2 oxidized [2Fe-2S]-[ferredoxin] + H2O = (2E)-4-hydroxy-3-methylbut-2-enyl diphosphate + 2 reduced [2Fe-2S]-[ferredoxin] + 2 H(+). Its pathway is isoprenoid biosynthesis; dimethylallyl diphosphate biosynthesis; dimethylallyl diphosphate from (2E)-4-hydroxy-3-methylbutenyl diphosphate: step 1/1. The protein operates within isoprenoid biosynthesis; isopentenyl diphosphate biosynthesis via DXP pathway; isopentenyl diphosphate from 1-deoxy-D-xylulose 5-phosphate: step 6/6. Its function is as follows. Catalyzes the conversion of 1-hydroxy-2-methyl-2-(E)-butenyl 4-diphosphate (HMBPP) into a mixture of isopentenyl diphosphate (IPP) and dimethylallyl diphosphate (DMAPP). Acts in the terminal step of the DOXP/MEP pathway for isoprenoid precursor biosynthesis. The chain is 4-hydroxy-3-methylbut-2-enyl diphosphate reductase from Cutibacterium acnes (strain DSM 16379 / KPA171202) (Propionibacterium acnes).